The sequence spans 199 residues: Large ribosomal subunit protein bL9 (199 aa).

The tract at residues 169–199 is disordered; that stretch reads TGGFTEEYDPNAEPGEIPTELLEGGEEAAEA.

Belongs to the bacterial ribosomal protein bL9 family.

Binds to the 23S rRNA. The sequence is that of Large ribosomal subunit protein bL9 from Novosphingobium aromaticivorans (strain ATCC 700278 / DSM 12444 / CCUG 56034 / CIP 105152 / NBRC 16084 / F199).